The sequence spans 629 residues: Ras GTPase-activating protein gap-1 (629 aa).

Residues 183–398 form the Ras-GAP domain; it reads DRIRPVLSSL…SVMASFLDNI (216 aa). The PH domain maps to 411 to 507; sequence TVFKFGNLQQ…WLNAIERQRN (97 aa).

It localises to the cytoplasm. Its function is as follows. GTPase-activating protein, which inhibits the vulval induction by acting as a negative regulator for the member of the Ras family let-60. Probably decreases the signaling activity of Ras by stimulating its intrinsic GTPase activity, thereby lowering the levels of GTP-bound, active Ras. This Caenorhabditis elegans protein is Ras GTPase-activating protein gap-1 (gap-1).